We begin with the raw amino-acid sequence, 242 residues long: Glutamine transport ATP-binding protein GlnQ (242 aa).

In terms of domain architecture, ABC transporter spans 2-236 (IYFHQVNKYY…PKEERAKVFL (235 aa)). ATP is bound at residue 34–41 (GPSGSGKS).

It belongs to the ABC transporter superfamily.

Its subcellular location is the cell membrane. Functionally, part of the binding-protein-dependent transport system for glutamine. Probably responsible for energy coupling to the transport system. In Geobacillus stearothermophilus (Bacillus stearothermophilus), this protein is Glutamine transport ATP-binding protein GlnQ (glnQ).